A 142-amino-acid polypeptide reads, in one-letter code: NADH-quinone oxidoreductase subunit A 2 (142 aa).

3 consecutive transmembrane segments (helical) span residues 18–38 (FLPL…LLLA), 73–93 (FYLI…IFAW), and 104–124 (GLVH…WLWL).

It belongs to the complex I subunit 3 family. As to quaternary structure, NDH-1 is composed of 14 different subunits. Subunits NuoA, H, J, K, L, M, N constitute the membrane sector of the complex.

It is found in the cell inner membrane. It carries out the reaction a quinone + NADH + 5 H(+)(in) = a quinol + NAD(+) + 4 H(+)(out). Functionally, NDH-1 shuttles electrons from NADH, via FMN and iron-sulfur (Fe-S) centers, to quinones in the respiratory chain. The immediate electron acceptor for the enzyme in this species is believed to be ubiquinone. Couples the redox reaction to proton translocation (for every two electrons transferred, four hydrogen ions are translocated across the cytoplasmic membrane), and thus conserves the redox energy in a proton gradient. In Geobacter sulfurreducens (strain ATCC 51573 / DSM 12127 / PCA), this protein is NADH-quinone oxidoreductase subunit A 2.